The sequence spans 221 residues: Epididymal secretory glutathione peroxidase (221 aa).

The N-terminal stretch at 1–21 is a signal peptide; that stretch reads MVTELRVFYLVPLLLASYVQT. Residue cysteine 73 is part of the active site.

Belongs to the glutathione peroxidase family. In terms of tissue distribution, epididymis.

The protein resides in the secreted. It catalyses the reaction 2 glutathione + H2O2 = glutathione disulfide + 2 H2O. Its function is as follows. Protects cells and enzymes from oxidative damage, by catalyzing the reduction of hydrogen peroxide, lipid peroxides and organic hydroperoxide, by glutathione. May constitute a glutathione peroxidase-like protective system against peroxide damage in sperm membrane lipids. This chain is Epididymal secretory glutathione peroxidase (Gpx5), found in Mus musculus (Mouse).